The primary structure comprises 170 residues: Protein SprT (170 aa).

The region spanning 23–165 is the SprT-like domain; the sequence is QLANQHLGTD…RECGEKLQFV (143 aa). His-78 lines the Zn(2+) pocket. Residue Glu-79 is part of the active site. His-82 contacts Zn(2+).

Belongs to the SprT family. Zn(2+) is required as a cofactor.

It localises to the cytoplasm. This chain is Protein SprT, found in Yersinia enterocolitica serotype O:8 / biotype 1B (strain NCTC 13174 / 8081).